The chain runs to 392 residues: 8-amino-7-oxononanoate synthase (392 aa).

Position 21 (Arg21) interacts with substrate. Residue 114–115 participates in pyridoxal 5'-phosphate binding; that stretch reads GY. Substrate is bound at residue His139. Pyridoxal 5'-phosphate-binding positions include Ser187, 212 to 215, and 243 to 246; these read DEAH and TFGK. Position 246 is an N6-(pyridoxal phosphate)lysine (Lys246). Thr359 is a binding site for substrate.

It belongs to the class-II pyridoxal-phosphate-dependent aminotransferase family. BioF subfamily. As to quaternary structure, homodimer. Requires pyridoxal 5'-phosphate as cofactor.

It carries out the reaction 6-carboxyhexanoyl-[ACP] + L-alanine + H(+) = (8S)-8-amino-7-oxononanoate + holo-[ACP] + CO2. It functions in the pathway cofactor biosynthesis; biotin biosynthesis. Functionally, catalyzes the decarboxylative condensation of pimeloyl-[acyl-carrier protein] and L-alanine to produce 8-amino-7-oxononanoate (AON), [acyl-carrier protein], and carbon dioxide. This is 8-amino-7-oxononanoate synthase from Chlorobaculum parvum (strain DSM 263 / NCIMB 8327) (Chlorobium vibrioforme subsp. thiosulfatophilum).